Here is a 429-residue protein sequence, read N- to C-terminus: Glucose-1-phosphate adenylyltransferase (429 aa).

Residues Gly-162, 177–178 (EK), and Ser-209 each bind alpha-D-glucose 1-phosphate.

This sequence belongs to the bacterial/plant glucose-1-phosphate adenylyltransferase family. Homotetramer.

The catalysed reaction is alpha-D-glucose 1-phosphate + ATP + H(+) = ADP-alpha-D-glucose + diphosphate. It functions in the pathway glycan biosynthesis; glycogen biosynthesis. Its function is as follows. Involved in the biosynthesis of ADP-glucose, a building block required for the elongation reactions to produce glycogen. Catalyzes the reaction between ATP and alpha-D-glucose 1-phosphate (G1P) to produce pyrophosphate and ADP-Glc. In Cyanothece sp. (strain PCC 7425 / ATCC 29141), this protein is Glucose-1-phosphate adenylyltransferase.